A 261-amino-acid polypeptide reads, in one-letter code: Na(+)-translocating NADH-quinone reductase subunit C (261 aa).

The helical transmembrane segment at 12-32 (LGVVVGLSLVCSIIVSTAAVG) threads the bilayer. Position 229 is an FMN phosphoryl threonine (Thr-229).

As to quaternary structure, composed of six subunits; NqrA, NqrB, NqrC, NqrD, NqrE and NqrF. It depends on FMN as a cofactor.

It is found in the cell inner membrane. It catalyses the reaction a ubiquinone + n Na(+)(in) + NADH + H(+) = a ubiquinol + n Na(+)(out) + NAD(+). Functionally, NQR complex catalyzes the reduction of ubiquinone-1 to ubiquinol by two successive reactions, coupled with the transport of Na(+) ions from the cytoplasm to the periplasm. NqrA to NqrE are probably involved in the second step, the conversion of ubisemiquinone to ubiquinol. The polypeptide is Na(+)-translocating NADH-quinone reductase subunit C (Vibrio campbellii (strain ATCC BAA-1116)).